Here is a 433-residue protein sequence, read N- to C-terminus: Protein RETICULATA-RELATED 1, chloroplastic (433 aa).

A chloroplast-targeting transit peptide spans 1-63 (MSISLKISHI…LSSRNLRNRC (63 aa)). Val64 bears the N-acetylvaline mark. Acidic residues predominate over residues 93-105 (DLEPELDDGDGGD). Positions 93–143 (DLEPELDDGDGGDENGNNDGGGNGGNGDGGGGGGDGEGDDGEDEADKAEEK) are disordered. Over residues 110–127 (NDGGGNGGNGDGGGGGGD) the composition is skewed to gly residues. Over residues 128–139 (GEGDDGEDEADK) the composition is skewed to acidic residues. The next 2 membrane-spanning stretches (helical) occupy residues 249-269 (LYAADLLVGLVVDVALVGLLA) and 323-343 (LLYGSVGFGCGLIGQGIANLI).

This sequence belongs to the RETICULATA family. Expressed in root vasculature, distal region of young leaf primordia, leaf bundle sheath cells, hydathodes and pollen grains.

The protein localises to the plastid. It is found in the chloroplast membrane. Its function is as follows. May play a role in leaf development. This Arabidopsis thaliana (Mouse-ear cress) protein is Protein RETICULATA-RELATED 1, chloroplastic.